A 123-amino-acid chain; its full sequence is Small ribosomal subunit protein uS12 (123 aa).

The interval 9–32 (ANPREVQKSRKKVPALQQSPQKRG) is disordered. Aspartate 89 is modified (3-methylthioaspartic acid).

Belongs to the universal ribosomal protein uS12 family. As to quaternary structure, part of the 30S ribosomal subunit. Contacts proteins S8 and S17. May interact with IF1 in the 30S initiation complex.

In terms of biological role, with S4 and S5 plays an important role in translational accuracy. Functionally, interacts with and stabilizes bases of the 16S rRNA that are involved in tRNA selection in the A site and with the mRNA backbone. Located at the interface of the 30S and 50S subunits, it traverses the body of the 30S subunit contacting proteins on the other side and probably holding the rRNA structure together. The combined cluster of proteins S8, S12 and S17 appears to hold together the shoulder and platform of the 30S subunit. This Bradyrhizobium sp. (strain BTAi1 / ATCC BAA-1182) protein is Small ribosomal subunit protein uS12.